The primary structure comprises 150 residues: 3-hydroxyacyl-[acyl-carrier-protein] dehydratase FabZ (150 aa).

Residue His-53 is part of the active site.

It belongs to the thioester dehydratase family. FabZ subfamily.

It localises to the cytoplasm. The enzyme catalyses a (3R)-hydroxyacyl-[ACP] = a (2E)-enoyl-[ACP] + H2O. Functionally, involved in unsaturated fatty acids biosynthesis. Catalyzes the dehydration of short chain beta-hydroxyacyl-ACPs and long chain saturated and unsaturated beta-hydroxyacyl-ACPs. This Proteus mirabilis (strain HI4320) protein is 3-hydroxyacyl-[acyl-carrier-protein] dehydratase FabZ.